A 798-amino-acid polypeptide reads, in one-letter code: Acetamidase regulatory protein (798 aa).

A DNA-binding region (zn(2)-C6 fungal-type) is located at residues 20–50 (CVHCHRRKVRCDARLVGLPCSNCRSAGKTDC). Disordered stretches follow at residues 68–96 (VPIR…PPNA), 115–172 (ANRV…ESRA), and 632–714 (LRTT…TLSA). Low complexity-rich tracts occupy residues 82-94 (KPIS…SEPP) and 133-147 (TRSN…QYQN). Residues 632–641 (LRTTTSDRPR) show a composition bias toward basic and acidic residues. Residues 644-663 (SNLSNNSTNSPASQQKNTSG) show a composition bias toward polar residues. Positions 678-687 (PSAPSIPPLQ) are enriched in pro residues.

The protein resides in the nucleus. Its function is as follows. Positively regulates the expression of 5 genes involved in the catabolism of certain amides (amdS), omega amino acids (gatA and gabA), and lactams (lamA and lamB) in the presence of omega amino acid inducers. The polypeptide is Acetamidase regulatory protein (amdR) (Emericella nidulans (strain FGSC A4 / ATCC 38163 / CBS 112.46 / NRRL 194 / M139) (Aspergillus nidulans)).